Reading from the N-terminus, the 513-residue chain is Activin receptor type-2A (513 aa).

An N-terminal signal peptide occupies residues 1-19; sequence MGAAAKLAFAVFLISCSSG. The Extracellular portion of the chain corresponds to 20–135; sequence AILGRSETQE…TSNPVTPKPP (116 aa). Intrachain disulfides connect Cys30–Cys60, Cys50–Cys78, Cys85–Cys104, Cys91–Cys103, and Cys105–Cys110. N-linked (GlcNAc...) asparagine glycans are attached at residues Asn43 and Asn66. The chain crosses the membrane as a helical span at residues 136–161; sequence YYNILLYSLVPLMLIAGIVICAFWVY. Over 162–513 the chain is Cytoplasmic; that stretch reads RHHKMAYPPV…VDFPPKESSL (352 aa). Residues 192–485 form the Protein kinase domain; sequence LQLLEVKARG…GERITQMQRL (294 aa). ATP-binding positions include 198–206 and Lys219; that span reads KARGRFGCV. Asp322 (proton acceptor) is an active-site residue.

The protein belongs to the protein kinase superfamily. TKL Ser/Thr protein kinase family. TGFB receptor subfamily. As to quaternary structure, part of a complex consisting of MAGI2/ARIP1, ACVR2A, ACVR1B and SMAD3. Interacts with MAGI2/ARIP1. Interacts with type I receptor ACVR1. Interacts with BMP7. Interacts with TSC22D1/TSC-22. Interacts with activin A/INHBA. Mg(2+) is required as a cofactor. Requires Mn(2+) as cofactor.

Its subcellular location is the cell membrane. It catalyses the reaction L-threonyl-[receptor-protein] + ATP = O-phospho-L-threonyl-[receptor-protein] + ADP + H(+). The catalysed reaction is L-seryl-[receptor-protein] + ATP = O-phospho-L-seryl-[receptor-protein] + ADP + H(+). On ligand binding, forms a receptor complex consisting of two type II and two type I transmembrane serine/threonine kinases. Type II receptors phosphorylate and activate type I receptors which autophosphorylate, then bind and activate SMAD transcriptional regulators. Receptor for activin A, activin B and inhibin A. Mediates induction of adipogenesis by GDF6. The polypeptide is Activin receptor type-2A (Homo sapiens (Human)).